The sequence spans 183 residues: Holliday junction branch migration complex subunit RuvA (183 aa).

The segment at 1–64 (MIVAIEGIVS…EDSHKLYGFL (64 aa)) is domain I. The tract at residues 65–138 (DTNEQRMFEL…SDAKINIENS (74 aa)) is domain II. A region of interest (flexible linker) is located at residue Ser-138. Residues 138 to 183 (SNQDHAQALAALLSLGFKQENILKVLRTCESQNTSELIKEALKKLA) form a domain III region.

This sequence belongs to the RuvA family. As to quaternary structure, homotetramer. Forms an RuvA(8)-RuvB(12)-Holliday junction (HJ) complex. HJ DNA is sandwiched between 2 RuvA tetramers; dsDNA enters through RuvA and exits via RuvB. An RuvB hexamer assembles on each DNA strand where it exits the tetramer. Each RuvB hexamer is contacted by two RuvA subunits (via domain III) on 2 adjacent RuvB subunits; this complex drives branch migration. In the full resolvosome a probable DNA-RuvA(4)-RuvB(12)-RuvC(2) complex forms which resolves the HJ.

It localises to the cytoplasm. Functionally, the RuvA-RuvB-RuvC complex processes Holliday junction (HJ) DNA during genetic recombination and DNA repair, while the RuvA-RuvB complex plays an important role in the rescue of blocked DNA replication forks via replication fork reversal (RFR). RuvA specifically binds to HJ cruciform DNA, conferring on it an open structure. The RuvB hexamer acts as an ATP-dependent pump, pulling dsDNA into and through the RuvAB complex. HJ branch migration allows RuvC to scan DNA until it finds its consensus sequence, where it cleaves and resolves the cruciform DNA. The polypeptide is Holliday junction branch migration complex subunit RuvA (Campylobacter lari (strain RM2100 / D67 / ATCC BAA-1060)).